The primary structure comprises 471 residues: Citrate synthase, mitochondrial (471 aa).

A mitochondrion-targeting transit peptide spans 1–18 (MASLRSATALSRLRSRAG). Active-site residues include His307, His353, and Asp408.

Belongs to the citrate synthase family. As to quaternary structure, homodimer.

The protein resides in the mitochondrion matrix. It catalyses the reaction oxaloacetate + acetyl-CoA + H2O = citrate + CoA + H(+). It participates in carbohydrate metabolism; tricarboxylic acid cycle; isocitrate from oxaloacetate: step 1/2. In Citrus maxima (Pomelo), this protein is Citrate synthase, mitochondrial (CIT).